The following is a 125-amino-acid chain: Small ribosomal subunit protein uS12 (125 aa).

Residue Asp89 is modified to 3-methylthioaspartic acid.

Belongs to the universal ribosomal protein uS12 family. Part of the 30S ribosomal subunit. Contacts proteins S8 and S17. May interact with IF1 in the 30S initiation complex.

Its function is as follows. With S4 and S5 plays an important role in translational accuracy. Interacts with and stabilizes bases of the 16S rRNA that are involved in tRNA selection in the A site and with the mRNA backbone. Located at the interface of the 30S and 50S subunits, it traverses the body of the 30S subunit contacting proteins on the other side and probably holding the rRNA structure together. The combined cluster of proteins S8, S12 and S17 appears to hold together the shoulder and platform of the 30S subunit. The protein is Small ribosomal subunit protein uS12 of Cupriavidus metallidurans (strain ATCC 43123 / DSM 2839 / NBRC 102507 / CH34) (Ralstonia metallidurans).